The following is a 308-amino-acid chain: Aspartate carbamoyltransferase catalytic subunit (308 aa).

The carbamoyl phosphate site is built by R57 and T58. K86 is an L-aspartate binding site. 3 residues coordinate carbamoyl phosphate: R107, H135, and Q138. 2 residues coordinate L-aspartate: R168 and R228. Carbamoyl phosphate-binding residues include L267 and P268.

Belongs to the aspartate/ornithine carbamoyltransferase superfamily. ATCase family. As to quaternary structure, heterododecamer (2C3:3R2) of six catalytic PyrB chains organized as two trimers (C3), and six regulatory PyrI chains organized as three dimers (R2).

It catalyses the reaction carbamoyl phosphate + L-aspartate = N-carbamoyl-L-aspartate + phosphate + H(+). The protein operates within pyrimidine metabolism; UMP biosynthesis via de novo pathway; (S)-dihydroorotate from bicarbonate: step 2/3. Catalyzes the condensation of carbamoyl phosphate and aspartate to form carbamoyl aspartate and inorganic phosphate, the committed step in the de novo pyrimidine nucleotide biosynthesis pathway. The chain is Aspartate carbamoyltransferase catalytic subunit from Leptospira interrogans serogroup Icterohaemorrhagiae serovar Lai (strain 56601).